The sequence spans 284 residues: MAIDAQKLVVVIVIVVVPLLFKFIIGPKTKPVLDPKRNDFQSFPLVEKTILTHNTSMYKFGLPHADDVLGLPIGQHIVIKANINGKDITRSYTPTSLDGDTKGNFELLVKSYPTGNVSKMIGELKIGDSIQIKGPRGNYHYERNCRSHLGMIAGGTGIAPMYQIMKAIAMDSHDTTKVSLVFGNVHEEDILLKKELEALVAMKPSQFKIVYYLDSPDREDWAGGVGYITKDVIKEHLPAATVDNVQILICGPPAMVASVRRSTVDLGFRRSKPLSKMEDQVFVF.

The helical transmembrane segment at 7–27 threads the bilayer; that stretch reads KLVVVIVIVVVPLLFKFIIGP. Residues 38 to 142 form the FAD-binding FR-type domain; it reads NDFQSFPLVE…KGPRGNYHYE (105 aa). 148–180 is an FAD binding site; the sequence is HLGMIAGGTGIAPMYQIMKAIAMDSHDTTKVSL.

Belongs to the flavoprotein pyridine nucleotide cytochrome reductase family. Monomer. Component of the 2-(3-amino-3-carboxypropyl)histidine synthase complex composed of DPH1, DPH2, KTI11/DPH3 and a NADH-dependent reductase, predominantly CBR1. Interacts with KTI11/DPH3. Interacts with STE20. Requires FAD as cofactor.

It is found in the mitochondrion outer membrane. The enzyme catalyses 2 Fe(III)-[cytochrome b5] + NADH = 2 Fe(II)-[cytochrome b5] + NAD(+) + H(+). It catalyses the reaction 2 Fe(3+)-[Dph3] + NADH = 2 Fe(2+)-[Dph3] + NAD(+) + H(+). It participates in protein modification; peptidyl-diphthamide biosynthesis. Its activity is regulated as follows. Competitively inhibited by NAD(+). Inhibited by mercurials such as p-chloromercuribenzoate (PCMB) and HgCl(2). Enzymatic activity increases under anaerobic conditions. Functionally, NADH-dependent reductase for KTI11/DPH3 and cytochrome b5. Required for the first step of diphthamide biosynthesis, a post-translational modification of histidine which occurs in elongation factor 2. DPH1 and DPH2 transfer a 3-amino-3-carboxypropyl (ACP) group from S-adenosyl-L-methionine (SAM) to a histidine residue, the reaction is assisted by a reduction system comprising KTI11/DPH3 and a NADH-dependent reductase, predominantly CBR1. By reducing KTI11/DPH3, also involved in the formation of the tRNA wobble base modification mcm5s 2U (5-methoxycarbonylmethyl-2-thiouridine), mediated by the elongator complex. The cytochrome b5/NADH cytochrome b5 reductase electron transfer system supports the catalytic activity of several sterol biosynthetic enzymes. Plays a role in bud morphology. In Saccharomyces cerevisiae (strain YJM789) (Baker's yeast), this protein is NADH-cytochrome b5 reductase 1 (CBR1).